The following is a 330-amino-acid chain: D-lactate dehydrogenase (330 aa).

Residues 155–156, Asp-175, 206–207, Asn-212, 233–235, and Asp-259 each bind NAD(+); these read RI, MP, and MAR. Residue Arg-235 is part of the active site. The active site involves Glu-264. His-296 (proton donor) is an active-site residue.

Belongs to the D-isomer specific 2-hydroxyacid dehydrogenase family.

The catalysed reaction is (R)-lactate + NAD(+) = pyruvate + NADH + H(+). This is D-lactate dehydrogenase (ldhD) from Streptococcus agalactiae serotype III (strain NEM316).